The chain runs to 825 residues: Cytosolic phospholipase A2 delta (825 aa).

One can recognise a C2 domain in the interval 14–133 (SPERLHGHPY…LPGQLLQKTF (120 aa)). Ca(2+)-binding residues include Asp-47, Asp-53, Asp-103, Asp-105, and Asp-111. One can recognise a PLA2c domain in the interval 281–825 (DCCPKELSVR…SETRPLGVKT (545 aa)). 339–340 (GG) is a substrate binding site. The active-site Nucleophile is Ser-370. Catalysis depends on Asp-654, which acts as the Proton acceptor.

Ca(2+) serves as cofactor. As to expression, weakly or not expressed in most tissues. Detected in placenta of 17.5 dpc embryos.

It localises to the cytoplasm. Its subcellular location is the cytosol. It is found in the membrane. The enzyme catalyses a 1,2-diacyl-sn-glycero-3-phosphocholine + H2O = a 1-acyl-sn-glycero-3-phosphocholine + a fatty acid + H(+). It carries out the reaction 1-hexadecanoyl-2-(5Z,8Z,11Z,14Z-eicosatetraenoyl)-sn-glycero-3-phosphocholine + H2O = 1-hexadecanoyl-sn-glycero-3-phosphocholine + (5Z,8Z,11Z,14Z)-eicosatetraenoate + H(+). The catalysed reaction is 1-hexadecanoyl-2-(9Z,12Z-octadecadienoyl)-sn-glycero-3-phosphocholine + H2O = (9Z,12Z)-octadecadienoate + 1-hexadecanoyl-sn-glycero-3-phosphocholine + H(+). It catalyses the reaction 1-hexadecanoyl-2-(9Z-octadecenoyl)-sn-glycero-3-phosphocholine + H2O = 1-hexadecanoyl-sn-glycero-3-phosphocholine + (9Z)-octadecenoate + H(+). The enzyme catalyses 1-hexadecanoyl-2-(5Z,8Z,11Z,14Z-eicosatetraenoyl)-sn-glycero-3-phosphoethanolamine + H2O = 1-hexadecanoyl-sn-glycero-3-phosphoethanolamine + (5Z,8Z,11Z,14Z)-eicosatetraenoate + H(+). It carries out the reaction 1-hexadecanoyl-2-(9Z,12Z-octadecadienoyl)-sn-glycero-3-phosphoethanolamine + H2O = 1-hexadecanoyl-sn-glycero-3-phosphoethanolamine + (9Z,12Z)-octadecadienoate + H(+). The catalysed reaction is 1-hexadecanoyl-sn-glycero-3-phosphocholine + H2O = sn-glycerol 3-phosphocholine + hexadecanoate + H(+). The protein operates within lipid metabolism; fatty acid metabolism. Its activity is regulated as follows. Stimulated by cytosolic Ca(2+). In terms of biological role, calcium-dependent phospholipase A2 that selectively hydrolyzes glycerophospholipids in the sn-2 position. Compared to its human ortholog, may have no preference for the fatty acid found at the sn-2 position. This Mus musculus (Mouse) protein is Cytosolic phospholipase A2 delta.